The following is a 767-amino-acid chain: E3 ubiquitin-protein ligase pub1 (767 aa).

A C2 domain is found at 1–111; the sequence is MSNSAQSRRI…AIGGDEMLTR (111 aa). The segment covering 138-158 has biased composition (polar residues); that stretch reads LQVPSSAASGARTQRTSITND. Disordered stretches follow at residues 138–216 and 252–306; these read LQVP…RRTD and SASS…RPYF. Threonine 156 is modified (phosphothreonine). The segment covering 159-176 has biased composition (low complexity); the sequence is PQSSQSSSVSRNPASSRA. Serine 178 is modified (phosphoserine). A Phosphothreonine modification is found at threonine 180. A compositionally biased stretch (low complexity) spans 184–194; it reads APAASPASSEP. Positions 211-236 constitute a WW 1 domain; that stretch reads WERRTDNLGRTYYVDHNTRSTTWIRP. Residues 257 to 286 show a composition bias toward polar residues; sequence NVTEGVQPSSSNAARRTEASVLTSNATTAG. 2 consecutive WW domains span residues 294–319 and 351–376; these read WEQR…WVDP and WEMR…WDDP. One can recognise an HECT domain in the interval 463-767; that stretch reads FLLSHEMFNP…VEETIGFGQE (305 aa). Cysteine 735 (glycyl thioester intermediate) is an active-site residue.

The protein localises to the membrane. It is found in the cytoplasm. It catalyses the reaction S-ubiquitinyl-[E2 ubiquitin-conjugating enzyme]-L-cysteine + [acceptor protein]-L-lysine = [E2 ubiquitin-conjugating enzyme]-L-cysteine + N(6)-ubiquitinyl-[acceptor protein]-L-lysine.. It functions in the pathway protein modification; protein ubiquitination. Functionally, E3 ubiquitin-protein ligase which accepts ubiquitin from an E2 ubiquitin-conjugating enzyme in the form of a thioester and then directly transfers the ubiquitin to targeted substrates. Regulates ubiquitination of cdc25. This chain is E3 ubiquitin-protein ligase pub1 (pub1), found in Schizosaccharomyces pombe (strain 972 / ATCC 24843) (Fission yeast).